Reading from the N-terminus, the 219-residue chain is Interleukin-12 subunit alpha (219 aa).

The first 22 residues, 1-22 (MCPARSLLLVATLVLLDYLSLA), serve as a signal peptide directing secretion. 2 N-linked (GlcNAc...) asparagine glycosylation sites follow: Asn-24 and Asn-93. 3 cysteine pairs are disulfide-bonded: Cys-37–Cys-110, Cys-64–Cys-196, and Cys-85–Cys-123.

Belongs to the IL-6 superfamily. As to quaternary structure, heterodimer with IL12B; disulfide-linked. This heterodimer is known as interleukin IL-12. Heterodimer with EBI3/IL27B; not disulfide-linked. This heterodimer is known as interleukin IL-35. Interacts with NBR1; this interaction promotes IL-12 secretion.

It localises to the secreted. In terms of biological role, heterodimerizes with IL12B to form the IL-12 cytokine or with EBI3/IL27B to form the IL-35 cytokine. IL-12 is primarily produced by professional antigen-presenting cells (APCs) such as B-cells and dendritic cells (DCs) as well as macrophages and granulocytes and regulates T-cell and natural killer-cell responses, induces the production of interferon-gamma (IFN-gamma), favors the differentiation of T-helper 1 (Th1) cells and is an important link between innate resistance and adaptive immunity. Mechanistically, exerts its biological effects through a receptor composed of IL12R1 and IL12R2 subunits. Binding to the receptor results in the rapid tyrosine phosphorylation of a number of cellular substrates including the JAK family kinases TYK2 and JAK2. In turn, recruited STAT4 gets phosphorylated and translocates to the nucleus where it regulates cytokine/growth factor responsive genes. As part of IL-35, plays essential roles in maintaining the immune homeostasis of the liver microenvironment and also functions as an immune-suppressive cytokine. Mediates biological events through unconventional receptors composed of IL12RB2 and gp130/IL6ST heterodimers or homodimers. Signaling requires the transcription factors STAT1 and STAT4, which form a unique heterodimer that binds to distinct DNA sites. In Papio anubis (Olive baboon), this protein is Interleukin-12 subunit alpha (IL12A).